Reading from the N-terminus, the 239-residue chain is Serine protease SplF (239 aa).

The first 36 residues, 1–36, serve as a signal peptide directing secretion; it reads MNKNIIIKSIAALTILTSITGVGTTVVDGIQQTAKA. Residues histidine 75, aspartate 114, and serine 192 each act as charge relay system in the active site.

It belongs to the peptidase S1B family.

Its subcellular location is the secreted. The protein is Serine protease SplF (splF) of Staphylococcus aureus (strain JH9).